Here is a 106-residue protein sequence, read N- to C-terminus: Large ribosomal subunit protein uL24 (106 aa).

This sequence belongs to the universal ribosomal protein uL24 family. As to quaternary structure, part of the 50S ribosomal subunit.

One of two assembly initiator proteins, it binds directly to the 5'-end of the 23S rRNA, where it nucleates assembly of the 50S subunit. Its function is as follows. One of the proteins that surrounds the polypeptide exit tunnel on the outside of the subunit. This Dechloromonas aromatica (strain RCB) protein is Large ribosomal subunit protein uL24.